The primary structure comprises 1102 residues: Coiled-coil domain-containing protein AGAP005037 (1102 aa).

Basic and acidic residues predominate over residues Met1–Ser11. 2 disordered regions span residues Met1 to Gly69 and His295 to Tyr318. Residues Ser12–Thr21 show a composition bias toward low complexity. Residues Ile50–Arg65 are compositionally biased toward basic and acidic residues. Positions His405–Asn430 form a coiled coil. 2 disordered regions span residues Arg450–His475 and Asp489–Met539. Coiled coils occupy residues Glu554–Leu579 and Asp614–Asn654. Disordered stretches follow at residues Leu745–Arg774, Thr832–Asn958, and Leu1031–Pro1087. Positions Thr832–Val849 are enriched in polar residues. Residues Pro867–Pro881 show a composition bias toward pro residues. Residues Thr904–Val918 show a composition bias toward low complexity. Positions Asp936–Asn958 are enriched in polar residues.

The chain is Coiled-coil domain-containing protein AGAP005037 from Anopheles gambiae (African malaria mosquito).